The primary structure comprises 332 residues: Cytoplasmic phosphatidylinositol transfer protein 1 (332 aa).

Phosphoserine occurs at positions 119, 270, and 274. Positions 267–285 are enriched in low complexity; that stretch reads SVRSAPSSAPSTPLSTDAP. The segment at 267–332 is disordered; sequence SVRSAPSSAP…SDKPCRPKSE (66 aa). Thr278 carries the phosphothreonine modification. Over residues 322 to 332 the composition is skewed to basic and acidic residues; that stretch reads SSDKPCRPKSE.

The protein belongs to the PtdIns transfer protein family. PI transfer class IIB subfamily. As to expression, ubiquitously expressed.

Its subcellular location is the cytoplasm. The catalysed reaction is a 1,2-diacyl-sn-glycero-3-phospho-(1D-myo-inositol)(in) = a 1,2-diacyl-sn-glycero-3-phospho-(1D-myo-inositol)(out). The enzyme catalyses a 1,2-diacyl-sn-glycero-3-phosphate(in) = a 1,2-diacyl-sn-glycero-3-phosphate(out). Catalyzes the transfer of phosphatidylinositol (PI) and phosphatidic acid (PA) between membranes. Binds PA derived from the phospholipase D signaling pathway and among the cellular PA species, preferably binds to the C16:0/16:1 and C16:1/18:1 PA species. Functionally, catalyzes the transfer of phosphatidylinositol between membranes. The polypeptide is Cytoplasmic phosphatidylinositol transfer protein 1 (PITPNC1) (Homo sapiens (Human)).